The following is an 813-amino-acid chain: Protein mac-1 (813 aa).

Coiled coils occupy residues 58–89 (VREA…VQEI) and 122–152 (SDDS…TVLN). Disordered stretches follow at residues 97–131 (TRKR…ERAA) and 152–193 (NLYT…GAVS). Positions 158–172 (SAPSTPVSTPKNQAT) are enriched in polar residues. Over residues 175 to 191 (PPGASAAPPALPRGLGA) the composition is skewed to low complexity. ATP-binding positions include 246 to 253 (GPPGCGKT) and 575 to 582 (GPPGCGKT).

This sequence belongs to the AAA ATPase family. Found in a complex composed of ced-3, ced-4 and mac-1 or of ced-9, ced-4 and mac-1. Within the complex, interacts with ced-4.

Probably together with ced-9, plays a modest role in preventing ced-4 and caspase ced-3-mediated apoptosis. In Caenorhabditis elegans, this protein is Protein mac-1.